Consider the following 555-residue polypeptide: Protein peste (555 aa).

The Cytoplasmic portion of the chain corresponds to 1–7 (MTSRTRH). The helical transmembrane segment at 8–28 (CARLGIVLLGICCIASGIYLF) threads the bilayer. Residues 29 to 434 (RNWIDMFTRM…VRVSEEIAAD (406 aa)) are Extracellular-facing. N-linked (GlcNAc...) asparagine glycans are attached at residues N70, N110, N129, N213, N242, N312, and N342. A helical membrane pass occupies residues 435–455 (IALVPLIVLLGQIVTGILLAG). At 456-555 (GLICTCWYPT…SEDSPDVVVR (100 aa)) the chain is on the cytoplasmic side.

The protein belongs to the CD36 family.

It is found in the cell membrane. Functionally, (Microbial infection) Plays a role in mycobacterial infection. Mediates infection by M.fortuitum and uptake of M.smegmatis. The chain is Protein peste from Drosophila melanogaster (Fruit fly).